The sequence spans 397 residues: MAKEKFERSKPHVNVGTIGHVDHGKTTLTAALTRVCSEVWGGQAVAFDGIDNAPEEKARGITIATSHVEYESPIRHYAHVDCPGHADYVKNMITGAAQMDGAILVCSAADGPMPQTREHILLARQVGVPYIVVFLNKADMVDDEELLELVEMEVRDLLSQYEFPGDDTPIIVGSALLALEGKDDNGMGTSAVKKLVETLDAYIPEPERAIDKPFLMPIEDVFSISGRGTVVTGRVERGIVRVGEEVEIVGIKDTTKTTCTGVEMFRKLLDEGRAGENVGVLLRGTKRDDVERGQVLAKPGTITPHTVFESEVYVLSKDEGGRHTPFFKGYRPQFYFRTTDVTGACELPEGVEMVMPGDNVKMKVSLIAPIAMEEGLRFAIREGGRTVGAGVVAKIFE.

Residues 10 to 207 enclose the tr-type G domain; it reads KPHVNVGTIG…TLDAYIPEPE (198 aa). The tract at residues 19–26 is G1; the sequence is GHVDHGKT. 19–26 contacts GTP; the sequence is GHVDHGKT. Position 26 (Thr26) interacts with Mg(2+). A G2 region spans residues 60 to 64; the sequence is GITIA. The segment at 81–84 is G3; that stretch reads DCPG. Residues 81–85 and 136–139 each bind GTP; these read DCPGH and NKAD. Residues 136 to 139 are G4; sequence NKAD. The segment at 174–176 is G5; the sequence is SAL.

The protein belongs to the TRAFAC class translation factor GTPase superfamily. Classic translation factor GTPase family. EF-Tu/EF-1A subfamily. In terms of assembly, monomer.

It is found in the cytoplasm. The catalysed reaction is GTP + H2O = GDP + phosphate + H(+). Its function is as follows. GTP hydrolase that promotes the GTP-dependent binding of aminoacyl-tRNA to the A-site of ribosomes during protein biosynthesis. The protein is Elongation factor Tu of Hahella chejuensis (strain KCTC 2396).